The primary structure comprises 420 residues: Senescence-associated protein SPA15, chloroplastic (420 aa).

The transit peptide at M1–R68 directs the protein to the chloroplast. Positions E85–P111 are disordered.

It belongs to the ATA15/OSA15 family. As to expression, expressed in leaves.

It localises to the plastid. The protein localises to the chloroplast. May be involved in the regulation of leaf senescence. In Ipomoea batatas (Sweet potato), this protein is Senescence-associated protein SPA15, chloroplastic.